Here is a 673-residue protein sequence, read N- to C-terminus: MFNLNTKSSKEPEVTEVAVDSTPSSPVTRESSPESSPDNSAVDLEKGKKSKFEMHDQTNLLPRSQLFLVFGAMAFCMLVSFMDQNGISVALPDIAKDLNATDTISWAGTSGLIANTVFQVLYGRLSDIFGRKLVFMIVVCTLVCADIGCACAQTSTQLYIFRAFSGIANGGMSCLTMIVVSDIVTLKERGKYQGILGACVGLGNTIGPFLGAAFTENVSWRAIFYLLAPMGGLCAVVIFFILPSKKPQGSAIQKAKAIDYPGLFCSSVALVFLLVPIAGGGSYYEWDSPMVISMLCIGGVFFIAFFVIEGFFAKLPMMPLRIFGTKALFALMMHSVLLGIAYYGDLYYLPMYMRNIRGWSSMKAAGMSCALVTTQAVTTVISGQYLSRMGRYLEVIYFGFGIWTVGAIMKCFWKRDSNMALLIFSLLFEGAGVGCCFQPTLVAAQALSRKEDRSVVISSRNFLRSFGGAVGLAVCSAILANSLKADLKTKNLPSELYELIVKAPFSLPDLSHYPEYRDQVLDAYMNGSHTVFVFLCPIVGACLLVTVFVKDHGLQTHEKKAAEAKTVEDKDKDESGTDCEDMTKGEVLVSEKEGKLSRNSSSQSMHFGDHTAVNTPAPTGYNTPVVGTLCHNSPNFPPMDHNDVITPLEDFDESPLPPHSPNSSGKRVTIQEE.

The interval 1–44 (MFNLNTKSSKEPEVTEVAVDSTPSSPVTRESSPESSPDNSAVDL) is disordered. The segment covering 21–39 (STPSSPVTRESSPESSPDN) has biased composition (polar residues). A helical membrane pass occupies residues 67-87 (FLVFGAMAFCMLVSFMDQNGI). Residue N99 is glycosylated (N-linked (GlcNAc...) asparagine). A run of 4 helical transmembrane segments spans residues 103–123 (TISW…VLYG), 133–153 (LVFM…ACAQ), 164–184 (FSGI…SDIV), and 194–214 (GILG…GAAF). N-linked (GlcNAc...) asparagine glycosylation is present at N217. 8 helical membrane-spanning segments follow: residues 222–242 (AIFY…FFIL), 261–281 (PGLF…AGGG), 292–312 (ISML…EGFF), 322–342 (IFGT…GIAY), 364–384 (AAGM…ISGQ), 393–413 (LEVI…KCFW), 419–439 (MALL…CFQP), and 465–485 (SFGG…SLKA). N-linked (GlcNAc...) asparagine glycosylation occurs at N526. Residues 529-549 (HTVFVFLCPIVGACLLVTVFV) traverse the membrane as a helical segment. Positions 564 to 596 (AKTVEDKDKDESGTDCEDMTKGEVLVSEKEGKL) are enriched in basic and acidic residues. Disordered stretches follow at residues 564–608 (AKTV…MHFG) and 636–673 (FPPM…IQEE). 2 N-linked (GlcNAc...) asparagine glycosylation sites follow: N599 and N662.

It belongs to the major facilitator superfamily.

The protein resides in the cell membrane. It carries out the reaction citrate(in) = citrate(out). Transmembrane transporter that exports citrate across the cell membrane. This Yarrowia lipolytica (strain CLIB 122 / E 150) (Yeast) protein is Citrate exporter 1.